The following is a 62-amino-acid chain: Protein sigN176 (62 aa).

This is Protein sigN176 from Dictyostelium discoideum (Social amoeba).